A 201-amino-acid polypeptide reads, in one-letter code: Probable molybdenum cofactor guanylyltransferase (201 aa).

GTP-binding positions include 16 to 18 (LAG), K28, D75, and D107. Position 107 (D107) interacts with Mg(2+).

The protein belongs to the MobA family. The cofactor is Mg(2+).

It localises to the cytoplasm. It catalyses the reaction Mo-molybdopterin + GTP + H(+) = Mo-molybdopterin guanine dinucleotide + diphosphate. Transfers a GMP moiety from GTP to Mo-molybdopterin (Mo-MPT) cofactor (Moco or molybdenum cofactor) to form Mo-molybdopterin guanine dinucleotide (Mo-MGD) cofactor. The protein is Probable molybdenum cofactor guanylyltransferase of Mycobacterium marinum (strain ATCC BAA-535 / M).